A 358-amino-acid chain; its full sequence is Methionine import ATP-binding protein MetN (358 aa).

Residues 14–255 (VVFDAVSKRF…SRHETTRALL (242 aa)) form the ABC transporter domain. Position 52–59 (52–59 (GRSGAGKS)) interacts with ATP.

It belongs to the ABC transporter superfamily. Methionine importer (TC 3.A.1.24) family. The complex is composed of two ATP-binding proteins (MetN), two transmembrane proteins (MetI) and a solute-binding protein (MetQ).

The protein localises to the cell inner membrane. The catalysed reaction is L-methionine(out) + ATP + H2O = L-methionine(in) + ADP + phosphate + H(+). The enzyme catalyses D-methionine(out) + ATP + H2O = D-methionine(in) + ADP + phosphate + H(+). Functionally, part of the ABC transporter complex MetNIQ involved in methionine import. Responsible for energy coupling to the transport system. This Rhizobium meliloti (strain 1021) (Ensifer meliloti) protein is Methionine import ATP-binding protein MetN.